The following is a 349-amino-acid chain: Cobalt-precorrin-5B C(1)-methyltransferase (349 aa).

This sequence belongs to the CbiD family.

It carries out the reaction Co-precorrin-5B + S-adenosyl-L-methionine = Co-precorrin-6A + S-adenosyl-L-homocysteine. It participates in cofactor biosynthesis; adenosylcobalamin biosynthesis; cob(II)yrinate a,c-diamide from sirohydrochlorin (anaerobic route): step 6/10. Its function is as follows. Catalyzes the methylation of C-1 in cobalt-precorrin-5B to form cobalt-precorrin-6A. This is Cobalt-precorrin-5B C(1)-methyltransferase from Saccharolobus islandicus (strain Y.N.15.51 / Yellowstone #2) (Sulfolobus islandicus).